The primary structure comprises 722 residues: Serine/threonine-protein kinase dkf-1 (722 aa).

2 consecutive Phorbol-ester/DAG-type zinc fingers follow at residues 98–148 and 186–236; these read PHVV…RNNC and PHTL…ASNC. The PH domain maps to 279–407; that stretch reads KKLEGWMMHF…QFIKESLQPP (129 aa). The Protein kinase domain maps to 426–685; the sequence is VLSDKTLGSG…IEQCLDHGWL (260 aa). Residues 432–440 and K455 each bind ATP; that span reads LGSGQFGTV. The active-site Proton acceptor is D551. T588 is modified (phosphothreonine).

The protein belongs to the protein kinase superfamily. CAMK Ser/Thr protein kinase family. PKD subfamily. It depends on Mg(2+) as a cofactor. Post-translationally, prolonged phosphorylation at Thr-588 results in ubiquitination and degradation. In terms of tissue distribution, highly expressed in embryos and at lower levels through the four larval stages in adults. Present in a region bounded by the anterior and posterior bulbs of the pharynx and an area of the tail containing the lumbar, dorsorectal and pre-anal ganglia. Expressed in neurons.

The protein localises to the cytoplasm. The protein resides in the membrane. It catalyses the reaction L-seryl-[protein] + ATP = O-phospho-L-seryl-[protein] + ADP + H(+). The enzyme catalyses L-threonyl-[protein] + ATP = O-phospho-L-threonyl-[protein] + ADP + H(+). Its activity is regulated as follows. Activated by DAG and phorbol esters. Phorbol-ester/DAG-type domain 1 binds phorbol ester with high affinity and mediates accumulation at the cell periphery. Phorbol-ester/DAG-type domain 2 binds phorbol ester with low affinity but may mediate initial contact, resulting in a conformational change allowing previously occluded domain 1 to anchor the kinase. Phosphorylation on Thr-588 is then also required for activation and may also result in a further conformational change. In terms of biological role, converts transient diacylglycerol (DAG) signals into prolonged physiological effects, independently of PKC. Role in the regulation of growth and neuromuscular control of movement. Involved in immune response to S.aureus bacterium by activating transcription factor hlh-30 downstream of phospholipase plc-1. The chain is Serine/threonine-protein kinase dkf-1 (dkf-1) from Caenorhabditis elegans.